Consider the following 452-residue polypeptide: UDP-N-acetylmuramoylalanine--D-glutamate ligase (452 aa).

119-125 (GSNGKTT) contacts ATP.

This sequence belongs to the MurCDEF family.

It localises to the cytoplasm. The enzyme catalyses UDP-N-acetyl-alpha-D-muramoyl-L-alanine + D-glutamate + ATP = UDP-N-acetyl-alpha-D-muramoyl-L-alanyl-D-glutamate + ADP + phosphate + H(+). The protein operates within cell wall biogenesis; peptidoglycan biosynthesis. In terms of biological role, cell wall formation. Catalyzes the addition of glutamate to the nucleotide precursor UDP-N-acetylmuramoyl-L-alanine (UMA). The sequence is that of UDP-N-acetylmuramoylalanine--D-glutamate ligase (murD) from Streptococcus pyogenes serotype M1.